Reading from the N-terminus, the 241-residue chain is CD99 antigen-like protein 2 (241 aa).

The signal sequence occupies residues 1 to 23 (MAKWGSPFVFALACLALSWRVYG). The Extracellular portion of the chain corresponds to 24 to 173 (DDFDLYDALG…TGFGSQAETG (150 aa)). A disordered region spans residues 30–168 (DALGDPTEKP…NDGSDTGFGS (139 aa)). Positions 143–154 (GGGGGGGGGRAT) are enriched in gly residues. A helical membrane pass occupies residues 174–196 (TIAGIASALAMALIGAVSSYISY). The Cytoplasmic segment spans residues 197–241 (QQKKFCFSIQEGLNAEYVKGEHMEAVVSEEPQVKYSVVESQSAIP).

Belongs to the CD99 family.

The protein resides in the cell membrane. It is found in the cell junction. Its function is as follows. May function as a homophilic adhesion molecule. The chain is CD99 antigen-like protein 2 (cd99l2) from Xenopus tropicalis (Western clawed frog).